Consider the following 93-residue polypeptide: Cell division topological specificity factor (93 aa).

The protein belongs to the MinE family.

In terms of biological role, prevents the cell division inhibition by proteins MinC and MinD at internal division sites while permitting inhibition at polar sites. This ensures cell division at the proper site by restricting the formation of a division septum at the midpoint of the long axis of the cell. The polypeptide is Cell division topological specificity factor (Methylococcus capsulatus (strain ATCC 33009 / NCIMB 11132 / Bath)).